Consider the following 221-residue polypeptide: Iron-sulfur cluster assembly SufBD family protein ycf24 (221 aa).

Belongs to the iron-sulfur cluster assembly SufBD family.

Its subcellular location is the plastid. The protein resides in the chloroplast. The sequence is that of Iron-sulfur cluster assembly SufBD family protein ycf24 (ycf24) from Galdieria sulphuraria (Red alga).